Here is a 225-residue protein sequence, read N- to C-terminus: Large ribosomal subunit protein mL58 (225 aa).

Positions 106-138 are disordered; the sequence is PQAPITTPESSSTDAAAADQHGDLPPVLYNPTK. Polar residues predominate over residues 109 to 119; the sequence is PITTPESSSTD.

It belongs to the mitochondrion-specific ribosomal protein mL58 family. In terms of assembly, component of the mitochondrial large ribosomal subunit (mt-LSU). Mature N.crassa 74S mitochondrial ribosomes consist of a small (37S) and a large (54S) subunit. The 37S small subunit contains a 16S ribosomal RNA (16S mt-rRNA) and 32 different proteins. The 54S large subunit contains a 23S rRNA (23S mt-rRNA) and 42 different proteins.

The protein resides in the mitochondrion. Functionally, component of the mitochondrial ribosome (mitoribosome), a dedicated translation machinery responsible for the synthesis of mitochondrial genome-encoded proteins, including at least some of the essential transmembrane subunits of the mitochondrial respiratory chain. The mitoribosomes are attached to the mitochondrial inner membrane and translation products are cotranslationally integrated into the membrane. This Neurospora crassa (strain ATCC 24698 / 74-OR23-1A / CBS 708.71 / DSM 1257 / FGSC 987) protein is Large ribosomal subunit protein mL58 (mrpl20).